Reading from the N-terminus, the 31-residue chain is Mu-conotoxin SmIIIA (31 aa).

Positions 1–6 (PLFDKR) are excised as a propeptide. Gln-7 carries the pyrrolidone carboxylic acid modification. Intrachain disulfides connect Cys-9/Cys-21, Cys-10/Cys-27, and Cys-16/Cys-28. Cys-28 is modified (cysteine amide).

This sequence belongs to the conotoxin M superfamily. Post-translationally, smIIIA' is a putative isoform where the N-terminal AA is missing. As to expression, expressed by the venom duct.

Its subcellular location is the secreted. Functionally, mu-conotoxins block voltage-gated sodium channels (Nav). This toxin blocks rNav1.5/SCN5A (IC(50) is 1.3 uM), rNav1.6/SCN8A (IC(50) is 160 nM), rNav1.7/SCN9A (IC(50) is 1.3 uM), rNav1.1/SCN1A (K(d) is 3.8 nM), rNav1.2/SCN2A (K(d) is 1.3 nM), rNav1.4/SCN4A (K(d) is 0.22 nM), rNav1.6/SCN8A (K(d) is 69 nM), and rNav1.7/SCN9A (K(d) is 260 nM). This toxin is very potent but weakly discriminating among sodium channels. The block of these channels is modified when beta-subunits are coexpressed with alpha subunits. Hence, blocks of channels containing beta-1 and beta-3 subunits are more potent (compared to channels without beta subunits), whereas blocks of channels containing beta-2 and beta-4 subunits are less potent (compared to channels without beta subunits). In Conus stercusmuscarum (Fly-specked cone), this protein is Mu-conotoxin SmIIIA.